The primary structure comprises 142 residues: MTRTINLQLPKRTSTYSSNFLKPAGCPKYEFVEGSKKPSRPRNKFIIMRTIFHNSSSKIVSAIWKHSPDQFQKYFQLLAEFEQNWHKHNHSPAAALTDAEAFRVIARSLHPQPRVIKRRQQKKKVKMLCGRFSRIEDVFSSL.

The protein localises to the nucleus. The polypeptide is Putative mating-type transcription factor (Eremothecium gossypii (strain ATCC 10895 / CBS 109.51 / FGSC 9923 / NRRL Y-1056) (Yeast)).